A 410-amino-acid chain; its full sequence is Auxin-induced protein 5NG4 (410 aa).

At 1 to 16 the chain is on the cytoplasmic side; that stretch reads MASNIMQRCNVFMSER. The chain crosses the membrane as a helical span at residues 17–37; it reads VKLHAAMLALQFGYAGFHIVS. Topologically, residues 38-47 are extracellular; sequence RAALNMGVSK. Residues 48 to 68 form a helical membrane-spanning segment; it reads VVFPVYRNILALMLIGPCAYF. Residues 69–74 are Cytoplasmic-facing; it reads LEKKER. A helical membrane pass occupies residues 75 to 95; the sequence is PALTLSFLIQFFLLALCGITG. Residues 96 to 109 lie on the Extracellular side of the membrane; the sequence is QSRILSLRIVLHIP. A helical transmembrane segment spans residues 110–130; the sequence is TFASAIQNSVPAITFIMAAAL. Residues 131–141 lie on the Cytoplasmic side of the membrane; the sequence is RLEKVHISRRD. A helical membrane pass occupies residues 142–162; that stretch reads GLAKIIGTVACVSGATIITLY. Topologically, residues 163–196 are extracellular; that stretch reads KGPPITHIWRPNLEVTASYFKAFQGNDLSAKSEN. N-linked (GlcNAc...) asparagine glycosylation is present at N196. A helical membrane pass occupies residues 197–217; sequence WTLGCIYLLGNCLAWSGWIVL. The EamA domain maps to 209–338; it reads LAWSGWIVLQ…IIIGLYLVLW (130 aa). Residues 218–229 are Cytoplasmic-facing; that stretch reads QAPVLKRYPARL. A helical membrane pass occupies residues 230 to 250; that stretch reads SVTSFTCFFGVIQFLIIAAFF. At 251–264 the chain is on the extracellular side; it reads ETDLEHWKIHSGGE. Residues 265–285 traverse the membrane as a helical segment; that stretch reads LFTILYAGFVASGIAFSVQIW. The Cytoplasmic segment spans residues 286–292; it reads CIDRGGP. Residues 293–313 form a helical membrane-spanning segment; the sequence is VFVAVYQPVQTIAVAIMASII. The Extracellular portion of the chain corresponds to 314–317; sequence LGEQ. Residues 318 to 338 form a helical membrane-spanning segment; it reads FYLGGIFGAILIIIGLYLVLW. Topologically, residues 339–410 are cytoplasmic; it reads GKSEEKRLGL…IPSPSDEPQP (72 aa).

Belongs to the drug/metabolite transporter (DMT) superfamily. Plant drug/metabolite exporter (P-DME) (TC 2.A.7.4) family.

Its subcellular location is the membrane. This Pinus taeda (Loblolly pine) protein is Auxin-induced protein 5NG4.